The following is a 143-amino-acid chain: Putative pre-16S rRNA nuclease (143 aa).

The protein belongs to the YqgF nuclease family.

The protein localises to the cytoplasm. Its function is as follows. Could be a nuclease involved in processing of the 5'-end of pre-16S rRNA. The chain is Putative pre-16S rRNA nuclease from Leuconostoc mesenteroides subsp. mesenteroides (strain ATCC 8293 / DSM 20343 / BCRC 11652 / CCM 1803 / JCM 6124 / NCDO 523 / NBRC 100496 / NCIMB 8023 / NCTC 12954 / NRRL B-1118 / 37Y).